Consider the following 467-residue polypeptide: Transcription factor bHLH3 (467 aa).

The 50-residue stretch at 316-365 (EEALNHVEAERQRREKLNQRFYALRAVVPNISKMDKASLLADAITYITDM) folds into the bHLH domain.

Homodimer.

It is found in the nucleus. In Arabidopsis thaliana (Mouse-ear cress), this protein is Transcription factor bHLH3 (BHLH3).